We begin with the raw amino-acid sequence, 263 residues long: Mannose-specific lectin 2 (263 aa).

The signal sequence occupies residues 1-24 (MAKSLVLSSLLLALLLAAPLASLA). 2 Bulb-type lectin domains span residues 26–136 (NNVL…APNR) and 150–260 (RNVL…SSAS). 2 disulfides stabilise this stretch: Cys54–Cys76 and Cys178–Cys203.

In terms of assembly, heterotetramer of 2 domain 1 and 2 domain 2 chains arranged as a dimer of domain 1/domain 2 heterodimers.

Its function is as follows. Mannose-specific lectin. Has weak agglutinating activity towards trypsin-treated erythrocytes from rabbit but not from human. In Crocus vernus (Dutch crocus), this protein is Mannose-specific lectin 2.